Here is a 126-residue protein sequence, read N- to C-terminus: Large ribosomal subunit protein bL20 (126 aa).

The protein belongs to the bacterial ribosomal protein bL20 family.

Binds directly to 23S ribosomal RNA and is necessary for the in vitro assembly process of the 50S ribosomal subunit. It is not involved in the protein synthesizing functions of that subunit. The chain is Large ribosomal subunit protein bL20 from Parafrankia sp. (strain EAN1pec).